Consider the following 363-residue polypeptide: G kinase-anchoring protein 1-B (363 aa).

Disordered regions lie at residues 17-79 (ALLK…RNLA) and 147-182 (VNGDGVNGVPQSKKVNKKDKRKNNQGKDKPLTVPLK). The stretch at 50-79 (KTNVNEKKKEKRRKKKEQQQSEANELRNLA) forms a coiled coil. Basic residues predominate over residues 160 to 170 (KVNKKDKRKNN). Coiled coils occupy residues 249–298 (DGKT…QEGE) and 328–348 (AALEQERSKVKVLQAEQVRYQ).

Belongs to the GKAP1 family.

The protein resides in the golgi apparatus. Functionally, may play a role in the regulation of insulin-dependent IRS1 tyrosine phosphorylation in adipocytes. The polypeptide is G kinase-anchoring protein 1-B (gkap1-b) (Xenopus laevis (African clawed frog)).